Reading from the N-terminus, the 29-residue chain is Photosystem I reaction center subunit XII (29 aa).

A helical transmembrane segment spans residues 7–24; sequence FVALLLALVPAVLAYRLG.

It belongs to the PsaM family.

The protein resides in the cellular thylakoid membrane. The chain is Photosystem I reaction center subunit XII from Synechococcus sp. (strain ATCC 27144 / PCC 6301 / SAUG 1402/1) (Anacystis nidulans).